We begin with the raw amino-acid sequence, 99 residues long: Small ribosomal subunit protein uS14m (99 aa).

It belongs to the universal ribosomal protein uS14 family.

It localises to the mitochondrion. The protein is Small ribosomal subunit protein uS14m (RPS14) of Acanthamoeba castellanii (Amoeba).